We begin with the raw amino-acid sequence, 403 residues long: Na(+)/H(+) antiporter NhaA (403 aa).

The next 12 membrane-spanning stretches (helical) occupy residues 25–45 (IAGL…NSPF), 70–90 (LILW…GLEI), 105–125 (IALP…IFLA), 136–156 (GWAV…AMLG), 165–185 (VFLT…IALA), 188–208 (EGLS…LIVL), 213–233 (VASL…VLES), 234–254 (GVHS…RVSG), 269–289 (VALL…LGGV), 302–322 (IILG…GLAV), 340–360 (GAAL…GLAF), and 369–389 (VNLA…VVLA).

This sequence belongs to the NhaA Na(+)/H(+) (TC 2.A.33) antiporter family.

It is found in the cell inner membrane. The catalysed reaction is Na(+)(in) + 2 H(+)(out) = Na(+)(out) + 2 H(+)(in). Na(+)/H(+) antiporter that extrudes sodium in exchange for external protons. This chain is Na(+)/H(+) antiporter NhaA, found in Maricaulis maris (strain MCS10) (Caulobacter maris).